The sequence spans 942 residues: DNA polymerase I (942 aa).

The region spanning 177–269 is the 5'-3' exonuclease domain; that stretch reads EPDQLADLRG…LEAARIGVYD (93 aa). The 3'-5' exonuclease domain maps to 340-522; it reads TIVRDATALA…LTERLQRQLE (183 aa).

It belongs to the DNA polymerase type-A family. As to quaternary structure, single-chain monomer with multiple functions.

The catalysed reaction is DNA(n) + a 2'-deoxyribonucleoside 5'-triphosphate = DNA(n+1) + diphosphate. Its function is as follows. In addition to polymerase activity, this DNA polymerase exhibits 3'-5' and 5'-3' exonuclease activity. The chain is DNA polymerase I (polA) from Chloroflexus aurantiacus (strain ATCC 29366 / DSM 635 / J-10-fl).